Here is a 196-residue protein sequence, read N- to C-terminus: Phosphoheptose isomerase (196 aa).

The region spanning 34 to 192 is the SIS domain; it reads MVQCLLGGNK…CEIIDTTLFP (159 aa). 49–51 provides a ligand contact to substrate; sequence NGG. 2 residues coordinate Zn(2+): histidine 58 and glutamine 62. Residues glutamine 62, 91 to 92, 117 to 119, serine 122, and glutamine 172 contribute to the substrate site; these read ND and STS. Residues glutamine 172 and histidine 180 each contribute to the Zn(2+) site.

Belongs to the SIS family. GmhA subfamily. As to quaternary structure, homotetramer. The cofactor is Zn(2+).

It localises to the cytoplasm. The catalysed reaction is 2 D-sedoheptulose 7-phosphate = D-glycero-alpha-D-manno-heptose 7-phosphate + D-glycero-beta-D-manno-heptose 7-phosphate. Its pathway is carbohydrate biosynthesis; D-glycero-D-manno-heptose 7-phosphate biosynthesis; D-glycero-alpha-D-manno-heptose 7-phosphate and D-glycero-beta-D-manno-heptose 7-phosphate from sedoheptulose 7-phosphate: step 1/1. Functionally, catalyzes the isomerization of sedoheptulose 7-phosphate in D-glycero-D-manno-heptose 7-phosphate. The polypeptide is Phosphoheptose isomerase (Colwellia psychrerythraea (strain 34H / ATCC BAA-681) (Vibrio psychroerythus)).